A 557-amino-acid chain; its full sequence is 2,3-bisphosphoglycerate-independent phosphoglycerate mutase 1 (557 aa).

2 residues coordinate Mn(2+): aspartate 27 and serine 80. Serine 80 acts as the Phosphoserine intermediate in catalysis. Substrate contacts are provided by residues histidine 139, 169-170 (RD), arginine 205, arginine 212, 285-288 (RADR), and lysine 360. Mn(2+) contacts are provided by aspartate 429, histidine 433, aspartate 470, histidine 471, and histidine 500.

It belongs to the BPG-independent phosphoglycerate mutase family. Monomer. It depends on Mn(2+) as a cofactor.

The protein localises to the cytoplasm. The enzyme catalyses (2R)-2-phosphoglycerate = (2R)-3-phosphoglycerate. The protein operates within carbohydrate degradation; glycolysis; pyruvate from D-glyceraldehyde 3-phosphate: step 3/5. In terms of biological role, catalyzes the interconversion of 2-phosphoglycerate (2-PGA) and 3-phosphoglycerate (3-PGA). Required for guard cell function (e.g. blue light-, abscisic acid- (ABA), and low CO(2)-regulated stomatal movements) and fertility (e.g. pollen grains production). This is 2,3-bisphosphoglycerate-independent phosphoglycerate mutase 1 (PGM1) from Arabidopsis thaliana (Mouse-ear cress).